The primary structure comprises 217 residues: Adenylate kinase (217 aa).

An ATP-binding site is contributed by glycine 10–threonine 15. The tract at residues serine 30–valine 59 is NMP. AMP-binding positions include threonine 31, arginine 36, glutamate 57 to valine 59, glycine 85 to arginine 88, and glutamine 92. An LID region spans residues glycine 126–aspartate 164. Arginine 127 is an ATP binding site. Residues cysteine 130 and cysteine 133 each coordinate Zn(2+). Isoleucine 136 to tyrosine 137 contributes to the ATP binding site. Zn(2+)-binding residues include cysteine 150 and cysteine 153. Arginine 161 and arginine 172 together coordinate AMP. An ATP-binding site is contributed by aspartate 200.

Belongs to the adenylate kinase family. Monomer.

The protein localises to the cytoplasm. It carries out the reaction AMP + ATP = 2 ADP. Its pathway is purine metabolism; AMP biosynthesis via salvage pathway; AMP from ADP: step 1/1. In terms of biological role, catalyzes the reversible transfer of the terminal phosphate group between ATP and AMP. Plays an important role in cellular energy homeostasis and in adenine nucleotide metabolism. This chain is Adenylate kinase, found in Nitrosococcus oceani (strain ATCC 19707 / BCRC 17464 / JCM 30415 / NCIMB 11848 / C-107).